The following is a 121-amino-acid chain: Large ribosomal subunit protein bL12 (121 aa).

It belongs to the bacterial ribosomal protein bL12 family. Homodimer. Part of the ribosomal stalk of the 50S ribosomal subunit. Forms a multimeric L10(L12)X complex, where L10 forms an elongated spine to which 2 to 4 L12 dimers bind in a sequential fashion. Binds GTP-bound translation factors.

In terms of biological role, forms part of the ribosomal stalk which helps the ribosome interact with GTP-bound translation factors. Is thus essential for accurate translation. This chain is Large ribosomal subunit protein bL12, found in Shewanella baltica (strain OS223).